The chain runs to 623 residues: Xaa-Pro aminopeptidase 1 (623 aa).

Arginine 77 serves as a coordination point for a peptide. The residue at position 304 (lysine 304) is an N6-acetyllysine. A peptide is bound at residue histidine 395. Residues aspartate 415, aspartate 426, and histidine 489 each contribute to the Mn(2+) site. Residues histidine 489, histidine 498, and glutamate 523 each coordinate a peptide. 2 residues coordinate Mn(2+): glutamate 523 and glutamate 537.

This sequence belongs to the peptidase M24B family. In terms of assembly, homodimer. It depends on Mn(2+) as a cofactor. In terms of tissue distribution, expressed in all tissues tested, including liver, adrenal decapsular tissue, adrenal capsular tissue, corpus luteum, testis, submandibular gland, thymus, brain, cerebellum and heart. Highest levels in testis.

It is found in the cytoplasm. The catalysed reaction is Release of any N-terminal amino acid, including proline, that is linked to proline, even from a dipeptide or tripeptide.. Its activity is regulated as follows. Inhibited by inositol hexakisphosphate. In terms of biological role, metalloaminopeptidase that catalyzes the removal of a penultimate prolyl residue from the N-termini of peptides, such as Arg-Pro-Pro. Contributes to the degradation of bradykinin. The sequence is that of Xaa-Pro aminopeptidase 1 from Rattus norvegicus (Rat).